The sequence spans 1820 residues: Histone-lysine N-methyltransferase, H3 lysine-9 specific (1820 aa).

12 disordered regions span residues 1–54 (MPGA…TSMR), 74–251 (NLLP…TPVT), 284–618 (SLSD…APTK), 634–681 (SSER…KKAV), 804–836 (NVDDQDSAQPQNQTPLPSAISVSSKKNHGSLSK), 850–893 (SSTL…VNSW), 911–944 (HAKKKWKERERGKEREKEKVREKEKAEEENEQLR), 966–996 (DVESRTRSIPRADGETRKRPPSPGISVSTDA), 1063–1126 (PLSV…NGAV), 1183–1270 (RYAV…DRTA), 1296–1335 (KASAVSPVPSANRPSPAPSAKADLLPQKRKRRLKKITSQQ), and 1385–1407 (RSEPRTKREPIEEDNNEYFTDSD). Positions 11–31 (VDNPLVLDSSDSDDNLSGLPL) are enriched in low complexity. Polar residues predominate over residues 109-129 (ADSSSPPENQNVISFLGNHSQ). The span at 152–169 (GGENIAGQNNEANAAQAA) shows a compositional bias: low complexity. 2 stretches are compositionally biased toward polar residues: residues 174-204 (GTPSLTLSSNRPQSVSGAQLVVASSSRSAIN) and 212-222 (SIPQQSPSSRA). Composition is skewed to low complexity over residues 226–236 (RSASIASSRSR), 284–311 (SLSDPTILSPPSATSAPPNSPIPSTSTT), and 339–352 (TPATTSPAGPGPSA). The segment covering 361 to 370 (KSSDQKESPR) has biased composition (basic and acidic residues). Residues 374–385 (SKQPSSPSSTHG) are compositionally biased toward polar residues. Residues 400-424 (SATSGKSSAASSRSKSRAPLSSRAA) are compositionally biased toward low complexity. Polar residues predominate over residues 433–442 (SKTTSVSSTH). The span at 443-459 (PPSRASPSSLPSQSQRQ) shows a compositional bias: low complexity. Residues 479–510 (TLSSGTGQSTPSKFSLPTSDVASNQKNKSTGL) are compositionally biased toward polar residues. Composition is skewed to low complexity over residues 514 to 531 (PKKPSSTPTSSIPQRTST), 551 to 563 (QSSSEASRSIQTS), and 594 to 618 (TKATTLFHTTSSPPSPSQSTSAPTK). Composition is skewed to polar residues over residues 643–662 (GKSQTSDSVVAPAASQTAAS) and 810–827 (SAQPQNQTPLPSAISVSS). The span at 850-861 (SSTLGDSVSGLG) shows a compositional bias: low complexity. Residues 869 to 893 (TQSMPQSPLPTTNTNNSSGIEVNSW) are compositionally biased toward polar residues. Composition is skewed to basic and acidic residues over residues 917–944 (KERERGKEREKEKVREKEKAEEENEQLR) and 966–983 (DVESRTRSIPRADGETRK). The span at 1076–1089 (SSSSTSTPSLLSRS) shows a compositional bias: low complexity. Residues 1296–1320 (KASAVSPVPSANRPSPAPSAKADLL) are compositionally biased toward low complexity. The region spanning 1516–1585 (LGCDCDGPCD…ECMNRVIQRG (70 aa)) is the Pre-SET domain. Zn(2+)-binding residues include cysteine 1518, cysteine 1520, cysteine 1524, cysteine 1531, cysteine 1533, cysteine 1567, cysteine 1571, cysteine 1573, and cysteine 1577. In terms of domain architecture, SET spans 1590–1750 (TGIEIFKTKE…KHEELCISYK (161 aa)). Residues 1600-1602 (KGW), tyrosine 1643, arginine 1704, and 1707-1708 (NH) each bind S-adenosyl-L-methionine. Cysteine 1710 provides a ligand contact to Zn(2+). The segment at 1756 to 1794 (DDIPSPEPVKKKKGGKGKKQMSKTSASAHPPEMTALNSD) is disordered. Residues 1765 to 1776 (KKKKGGKGKKQM) are compositionally biased toward basic residues. A Post-SET domain is found at 1800-1816 (VKDICRCGAKNCDGRMF). The Zn(2+) site is built by cysteine 1804, cysteine 1806, and cysteine 1811.

It belongs to the class V-like SAM-binding methyltransferase superfamily. Histone-lysine methyltransferase family. Suvar3-9 subfamily.

It is found in the nucleus. The protein resides in the chromosome. It carries out the reaction N(6)-methyl-L-lysyl(9)-[histone H3] + S-adenosyl-L-methionine = N(6),N(6)-dimethyl-L-lysyl(9)-[histone H3] + S-adenosyl-L-homocysteine + H(+). The catalysed reaction is L-lysyl(9)-[histone H3] + S-adenosyl-L-methionine = N(6)-methyl-L-lysyl(9)-[histone H3] + S-adenosyl-L-homocysteine + H(+). Its function is as follows. Histone methyltransferase that specifically dimethylates histone H3 to form H3K9me2. H3K9me2 represents a specific tag for epigenetic transcriptional repression by recruiting HP1 proteins to methylated histones. Mainly functions in heterochromatin regions, thereby playing a central role in the establishment of constitutive heterochromatin at centromeric regions. The chain is Histone-lysine N-methyltransferase, H3 lysine-9 specific from Cryptococcus neoformans var. grubii serotype A (strain H99 / ATCC 208821 / CBS 10515 / FGSC 9487) (Filobasidiella neoformans var. grubii).